The primary structure comprises 128 residues: Large ribosomal subunit protein bL17 (128 aa).

This sequence belongs to the bacterial ribosomal protein bL17 family. In terms of assembly, part of the 50S ribosomal subunit. Contacts protein L32.

This chain is Large ribosomal subunit protein bL17, found in Streptococcus agalactiae serotype Ia (strain ATCC 27591 / A909 / CDC SS700).